We begin with the raw amino-acid sequence, 484 residues long: RuvB-like helicase 1 (484 aa).

The span at 1 to 11 (MSMAASSSTAT) shows a compositional bias: low complexity. Residues 1–27 (MSMAASSSTATVQPSGIITQPPPPSTL) are disordered. 87–94 (GPPGTGKT) serves as a coordination point for ATP.

The protein belongs to the RuvB family. As to quaternary structure, may form heterododecamers with RVB2. Component of the SWR1 chromatin remodeling complex, the INO80 chromatin remodeling complex, and of the R2TP complex.

It localises to the nucleus. It carries out the reaction ATP + H2O = ADP + phosphate + H(+). DNA helicase which participates in several chromatin remodeling complexes, including the SWR1 and the INO80 complexes. The SWR1 complex mediates the ATP-dependent exchange of histone H2A for the H2A variant HZT1 leading to transcriptional regulation of selected genes by chromatin remodeling. The INO80 complex remodels chromatin by shifting nucleosomes and is involved in DNA repair. Also involved in pre-rRNA processing. The chain is RuvB-like helicase 1 (RVB1) from Cryptococcus neoformans var. neoformans serotype D (strain B-3501A) (Filobasidiella neoformans).